We begin with the raw amino-acid sequence, 361 residues long: GDSL esterase/lipase At2g40250 (361 aa).

An N-terminal signal peptide occupies residues 1-28 (MNRNQHKPMFVTFLINILLLQLLNLTNA). The Nucleophile role is filled by Ser-43. Active-site residues include Asp-337 and His-340.

The protein belongs to the 'GDSL' lipolytic enzyme family.

The protein resides in the secreted. In Arabidopsis thaliana (Mouse-ear cress), this protein is GDSL esterase/lipase At2g40250.